A 118-amino-acid chain; its full sequence is Small ribosomal subunit protein uS13 (118 aa).

The interval 94 to 118 is disordered; sequence SLPVRGQRSKTNARTRKGPRKAIKK.

This sequence belongs to the universal ribosomal protein uS13 family. Part of the 30S ribosomal subunit. Forms a loose heterodimer with protein S19. Forms two bridges to the 50S subunit in the 70S ribosome.

In terms of biological role, located at the top of the head of the 30S subunit, it contacts several helices of the 16S rRNA. In the 70S ribosome it contacts the 23S rRNA (bridge B1a) and protein L5 of the 50S subunit (bridge B1b), connecting the 2 subunits; these bridges are implicated in subunit movement. Contacts the tRNAs in the A and P-sites. This Psychromonas ingrahamii (strain DSM 17664 / CCUG 51855 / 37) protein is Small ribosomal subunit protein uS13.